A 608-amino-acid polypeptide reads, in one-letter code: Albumin (608 aa).

The first 18 residues, 1–18, serve as a signal peptide directing secretion; that stretch reads MKWVTFISLLFLFSSAYS. The propeptide occupies 19-24; it reads RGVFRR. Albumin domains follow at residues 19–210, 211–403, and 404–601; these read RGVF…DALE, GKSL…EFQP, and LVDE…KLVE. Histidine 27 serves as a coordination point for Cu cation. The residue at position 29 (serine 29) is a Phosphoserine. Ca(2+) contacts are provided by glutamate 30 and aspartate 37. A disulfide bridge links cysteine 77 with cysteine 86. 2 positions are modified to phosphoserine: serine 82 and serine 89. Histidine 91 provides a ligand contact to Zn(2+). 6 disulfides stabilise this stretch: cysteine 99-cysteine 115, cysteine 114-cysteine 125, cysteine 148-cysteine 193, cysteine 192-cysteine 201, cysteine 224-cysteine 270, and cysteine 269-cysteine 277. Threonine 107 is modified (phosphothreonine). At lysine 229 the chain carries N6-succinyllysine. Glutamate 268 contacts Ca(2+). Zn(2+) contacts are provided by histidine 271 and aspartate 273. 4 residues coordinate Ca(2+): aspartate 273, glutamate 276, aspartate 279, and aspartate 283. Disulfide bonds link cysteine 289–cysteine 303, cysteine 302–cysteine 313, cysteine 340–cysteine 385, cysteine 384–cysteine 393, cysteine 416–cysteine 462, cysteine 461–cysteine 472, cysteine 485–cysteine 501, and cysteine 500–cysteine 511. Residue serine 297 is modified to Phosphoserine. Serine 443 carries the post-translational modification Phosphoserine. A phosphothreonine mark is found at threonine 444 and threonine 446. Lysine 460 carries the post-translational modification N6-succinyllysine. Serine 513 bears the Phosphoserine mark. 2 disulfides stabilise this stretch: cysteine 538–cysteine 583 and cysteine 582–cysteine 591. Lysine 558 is subject to N6-methyllysine. Threonine 570 bears the Phosphothreonine mark. N6-succinyllysine is present on lysine 588.

It belongs to the ALB/AFP/VDB family. Interacts with FCGRT; this interaction regulates ALB homeostasis. Interacts with TASOR. In plasma, occurs in a covalently-linked complex with chromophore-bound alpha-1-microglobulin; this interaction does not prevent fatty acid binding to ALB. Phosphorylated by FAM20C in the extracellular medium. In terms of tissue distribution, plasma.

The protein localises to the secreted. Functionally, binds water, Ca(2+), Na(+), K(+), fatty acids, hormones, bilirubin and drugs. Its main function is the regulation of the colloidal osmotic pressure of blood. Major zinc transporter in plasma, typically binds about 80% of all plasma zinc. Major calcium and magnesium transporter in plasma, binds approximately 45% of circulating calcium and magnesium in plasma. Potentially has more than two calcium-binding sites and might additionally bind calcium in a non-specific manner. The shared binding site between zinc and calcium at residue Asp-273 suggests a crosstalk between zinc and calcium transport in the blood. The rank order of affinity is zinc &gt; calcium &gt; magnesium. Binds to the bacterial siderophore enterobactin and inhibits enterobactin-mediated iron uptake of E.coli from ferric transferrin, and may thereby limit the utilization of iron and growth of enteric bacteria such as E.coli. Does not prevent iron uptake by the bacterial siderophore aerobactin. The sequence is that of Albumin (ALB) from Oryctolagus cuniculus (Rabbit).